Reading from the N-terminus, the 464-residue chain is Cystathionine beta-lyase, chloroplastic (464 aa).

The N-terminal 55 residues, 1 to 55 (MTSSLSLHSSFVPSFADLSDRGLISKNSPTSVSISKVPTWEKKQISNRNSFKLNC), are a transit peptide targeting the chloroplast. Tyrosine 127, arginine 129, glycine 157, methionine 158, serine 275, and threonine 277 together coordinate pyridoxal 5'-phosphate. Lysine 278 carries the N6-(pyridoxal phosphate)lysine modification.

The protein belongs to the trans-sulfuration enzymes family. As to quaternary structure, forms homodimers. May form homotetramers from two homodimers. The cofactor is pyridoxal 5'-phosphate.

The protein localises to the plastid. It localises to the chloroplast. The catalysed reaction is L,L-cystathionine + H2O = L-homocysteine + pyruvate + NH4(+). It catalyses the reaction an S-substituted L-cysteine + H2O = a thiol + pyruvate + NH4(+). It functions in the pathway amino-acid biosynthesis; L-methionine biosynthesis via de novo pathway; L-homocysteine from L-cystathionine: step 1/1. Functionally, catalyzes the penultimate step in the de novo biosynthesis of methionine. Its role in methionine metabolism may affect plant development in different organs, probably by modifying plant auxin transport. Its cysteine desulfhydrase activity may be involved in hydrogen sulfur production using L-cysteine as a substrate. The sequence is that of Cystathionine beta-lyase, chloroplastic from Arabidopsis thaliana (Mouse-ear cress).